The sequence spans 131 residues: uncharacterized protein (131 aa).

The first 19 residues, 1–19, serve as a signal peptide directing secretion; it reads MRESLFIIFFQFVCHSSNS. A run of 2 helical transmembrane segments spans residues 33–53 and 111–131; these read PLLT…ALFF and VSFN…FFLF.

It is found in the membrane. This is an uncharacterized protein from Saccharomyces cerevisiae (strain ATCC 204508 / S288c) (Baker's yeast).